The following is a 394-amino-acid chain: Teichoic acid poly(glycerol phosphate) polymerase (394 aa).

This sequence belongs to the CDP-glycerol glycerophosphotransferase family.

It localises to the cell membrane. It catalyses the reaction 4-O-[(2R)-glycerylphospho]-N-acetyl-beta-D-mannosaminyl-(1-&gt;4)-N-acetyl-alpha-D-glucosaminyl di-trans,octa-cis-undecaprenyl diphosphate + n CDP-glycerol = 4-O-{[(2R)-1-glycerylphospho](n)-(2R)-1-glycerylphospho}-N-acetyl-beta-D-mannosaminyl-(1-&gt;4)-N-acetyl-alpha-D-glucosaminyl undecaprenyl diphosphate + n CMP + n H(+). Functionally, catalyzes the addition of further 2-8 glycerol phosphate units from CDP-glycerol to the single glycerol phosphate unit bound to the prenolpyrophosphate-linked disaccharide. The function in the cell is unknown since the product is not part of the poly(ribitol phosphate) teichoic acid found in the cell walls. The protein is Teichoic acid poly(glycerol phosphate) polymerase (tarF) of Bacillus spizizenii (strain ATCC 23059 / NRRL B-14472 / W23) (Bacillus subtilis subsp. spizizenii).